The chain runs to 132 residues: Small ribosomal subunit protein uS8 (132 aa).

This sequence belongs to the universal ribosomal protein uS8 family. Part of the 30S ribosomal subunit. Contacts proteins S5 and S12.

Functionally, one of the primary rRNA binding proteins, it binds directly to 16S rRNA central domain where it helps coordinate assembly of the platform of the 30S subunit. This is Small ribosomal subunit protein uS8 from Thermoanaerobacter pseudethanolicus (strain ATCC 33223 / 39E) (Clostridium thermohydrosulfuricum).